Consider the following 157-residue polypeptide: 2-C-methyl-D-erythritol 2,4-cyclodiphosphate synthase (157 aa).

Positions 9 and 11 each coordinate a divalent metal cation. Residues 9–11 (DVH) and 35–36 (HS) each bind 4-CDP-2-C-methyl-D-erythritol 2-phosphate. His-43 serves as a coordination point for a divalent metal cation. Residues 57–59 (DIG), 62–66 (FPDTD), 101–107 (AEKPKMA), 133–136 (TTTE), Phe-140, and Arg-143 each bind 4-CDP-2-C-methyl-D-erythritol 2-phosphate.

It belongs to the IspF family. In terms of assembly, homotrimer. A divalent metal cation serves as cofactor.

It catalyses the reaction 4-CDP-2-C-methyl-D-erythritol 2-phosphate = 2-C-methyl-D-erythritol 2,4-cyclic diphosphate + CMP. Its pathway is isoprenoid biosynthesis; isopentenyl diphosphate biosynthesis via DXP pathway; isopentenyl diphosphate from 1-deoxy-D-xylulose 5-phosphate: step 4/6. Its function is as follows. Involved in the biosynthesis of isopentenyl diphosphate (IPP) and dimethylallyl diphosphate (DMAPP), two major building blocks of isoprenoid compounds. Catalyzes the conversion of 4-diphosphocytidyl-2-C-methyl-D-erythritol 2-phosphate (CDP-ME2P) to 2-C-methyl-D-erythritol 2,4-cyclodiphosphate (ME-CPP) with a corresponding release of cytidine 5-monophosphate (CMP). This Listeria monocytogenes serotype 4b (strain F2365) protein is 2-C-methyl-D-erythritol 2,4-cyclodiphosphate synthase.